A 79-amino-acid polypeptide reads, in one-letter code: Large ribosomal subunit protein bL31 (79 aa).

The protein belongs to the bacterial ribosomal protein bL31 family. Type A subfamily. As to quaternary structure, part of the 50S ribosomal subunit.

Functionally, binds the 23S rRNA. This is Large ribosomal subunit protein bL31 from Nostoc sp. (strain PCC 7120 / SAG 25.82 / UTEX 2576).